The sequence spans 513 residues: ATP synthase subunit alpha (513 aa).

169 to 176 serves as a coordination point for ATP; that stretch reads GDRQIGKT.

Belongs to the ATPase alpha/beta chains family. As to quaternary structure, F-type ATPases have 2 components, CF(1) - the catalytic core - and CF(0) - the membrane proton channel. CF(1) has five subunits: alpha(3), beta(3), gamma(1), delta(1), epsilon(1). CF(0) has three main subunits: a(1), b(2) and c(9-12). The alpha and beta chains form an alternating ring which encloses part of the gamma chain. CF(1) is attached to CF(0) by a central stalk formed by the gamma and epsilon chains, while a peripheral stalk is formed by the delta and b chains.

Its subcellular location is the cell inner membrane. It carries out the reaction ATP + H2O + 4 H(+)(in) = ADP + phosphate + 5 H(+)(out). Functionally, produces ATP from ADP in the presence of a proton gradient across the membrane. The alpha chain is a regulatory subunit. The polypeptide is ATP synthase subunit alpha (Francisella tularensis subsp. mediasiatica (strain FSC147)).